The chain runs to 343 residues: Ribosomal RNA small subunit methyltransferase C (343 aa).

This sequence belongs to the methyltransferase superfamily. RsmC family. As to quaternary structure, monomer.

It is found in the cytoplasm. The catalysed reaction is guanosine(1207) in 16S rRNA + S-adenosyl-L-methionine = N(2)-methylguanosine(1207) in 16S rRNA + S-adenosyl-L-homocysteine + H(+). Functionally, specifically methylates the guanine in position 1207 of 16S rRNA in the 30S particle. The protein is Ribosomal RNA small subunit methyltransferase C of Pseudoalteromonas atlantica (strain T6c / ATCC BAA-1087).